The primary structure comprises 103 residues: Large ribosomal subunit protein uL24 (103 aa).

It belongs to the universal ribosomal protein uL24 family. Part of the 50S ribosomal subunit.

One of two assembly initiator proteins, it binds directly to the 5'-end of the 23S rRNA, where it nucleates assembly of the 50S subunit. Functionally, one of the proteins that surrounds the polypeptide exit tunnel on the outside of the subunit. This chain is Large ribosomal subunit protein uL24, found in Actinobacillus succinogenes (strain ATCC 55618 / DSM 22257 / CCUG 43843 / 130Z).